The chain runs to 256 residues: Triosephosphate isomerase (256 aa).

Position 9–11 (9–11) interacts with substrate; that stretch reads NWK. Residue histidine 97 is the Electrophile of the active site. Catalysis depends on glutamate 169, which acts as the Proton acceptor. Substrate-binding positions include glycine 175, serine 214, and 235 to 236; that span reads GG.

It belongs to the triosephosphate isomerase family. In terms of assembly, homodimer.

The protein resides in the cytoplasm. The catalysed reaction is D-glyceraldehyde 3-phosphate = dihydroxyacetone phosphate. It functions in the pathway carbohydrate biosynthesis; gluconeogenesis. Its pathway is carbohydrate degradation; glycolysis; D-glyceraldehyde 3-phosphate from glycerone phosphate: step 1/1. In terms of biological role, involved in the gluconeogenesis. Catalyzes stereospecifically the conversion of dihydroxyacetone phosphate (DHAP) to D-glyceraldehyde-3-phosphate (G3P). The sequence is that of Triosephosphate isomerase from Aliivibrio salmonicida (strain LFI1238) (Vibrio salmonicida (strain LFI1238)).